A 378-amino-acid polypeptide reads, in one-letter code: Cell surface mannoprotein MP65 (378 aa).

The first 32 residues, 1–32, serve as a signal peptide directing secretion; it reads MLFKSFVTFTVLANALAAPLAHQHHQHKEEKR. A disordered region spans residues 67–124; that stretch reads VSVSVNTEPPQNHPTTTQDVASASTYPSSTDGSAASSSAAASSSSQAGSEPSGGVGSG. Residues 72–93 are compositionally biased toward polar residues; it reads NTEPPQNHPTTTQDVASASTYP. Residues 94–116 are compositionally biased toward low complexity; sequence SSTDGSAASSSAAASSSSQAGSE. Glutamate 316 functions as the Nucleophile in the catalytic mechanism.

Belongs to the glycosyl hydrolase 17 family. As to quaternary structure, component of a multiprotein complex of 250 kDa composed of at least HYR1, MP65, and PRA1. Glycosylated protein with a polysaccharide moiety composed exclusively of mannose and glucose at a ratio of 12.7 to 1. Contributes highly to the carbohydrate component of the matrix. Treatment with tunicamycin impairs glycosylation.

The protein resides in the secreted. It localises to the cell wall. In terms of biological role, surface mannoprotein required for hyphal morphogenesis, surface adherence, and pathogenicity. Contributes in a high proportion to the carbohydrate component of the matrix due to high levels of glycosylation and may play important roles during biofilm development and maintenance. Acts as a major antigen target of host cell-mediated immune response. Induces extensive T-cell proliferation of human peripheral blood mononuclear cells. Facilitates host dendritic cells maturation and promotes cytokine production through its glycosylated portion while its protein core is essentially involved in induction of T-cell response. In Candida albicans (strain SC5314 / ATCC MYA-2876) (Yeast), this protein is Cell surface mannoprotein MP65 (MP65).